Consider the following 207-residue polypeptide: Galactoside O-acetyltransferase (207 aa).

Asparagine 87 contacts acetyl-CoA. Residue histidine 117 is the Proton donor/acceptor of the active site. Acetyl-CoA is bound by residues alanine 144, alanine 162, 167–168, and arginine 185; that span reads TK.

Belongs to the transferase hexapeptide repeat family. Homotrimer.

Its subcellular location is the cytoplasm. The catalysed reaction is a beta-D-galactoside + acetyl-CoA = a 6-acetyl-beta-D-galactoside + CoA. This is Galactoside O-acetyltransferase (lacA) from Lactococcus lactis subsp. lactis (strain IL1403) (Streptococcus lactis).